We begin with the raw amino-acid sequence, 540 residues long: Phosphoenolpyruvate carboxykinase (ATP) (540 aa).

Arg65 is a substrate binding site. Lys87 carries the post-translational modification N6-acetyllysine. Substrate is bound by residues Tyr207 and Lys213. ATP-binding positions include Lys213, His232, and 248-256 (GLSGTGKTT). 2 residues coordinate Mn(2+): Lys213 and His232. Asp269 contacts Mn(2+). Residues Glu297, Arg333, 449 to 450 (RI), and Thr455 each bind ATP. Substrate is bound at residue Arg333. At Lys523 the chain carries N6-acetyllysine.

The protein belongs to the phosphoenolpyruvate carboxykinase (ATP) family. As to quaternary structure, monomer. It depends on Mn(2+) as a cofactor.

Its subcellular location is the cytoplasm. The enzyme catalyses oxaloacetate + ATP = phosphoenolpyruvate + ADP + CO2. It functions in the pathway carbohydrate biosynthesis; gluconeogenesis. Its function is as follows. Involved in the gluconeogenesis. Catalyzes the conversion of oxaloacetate (OAA) to phosphoenolpyruvate (PEP) through direct phosphoryl transfer between the nucleoside triphosphate and OAA. The protein is Phosphoenolpyruvate carboxykinase (ATP) of Escherichia coli O45:K1 (strain S88 / ExPEC).